A 383-amino-acid chain; its full sequence is Putative F-box protein At1g77650 (383 aa).

In terms of domain architecture, F-box spans methionine 1–leucine 47.

In Arabidopsis thaliana (Mouse-ear cress), this protein is Putative F-box protein At1g77650.